The sequence spans 190 residues: Female-specific histamine-binding protein 2 (190 aa).

The signal sequence occupies residues 1–19 (MKLLILSLALVLALSQVKG). The histamine site is built by serine 39, aspartate 43, tyrosine 55, aspartate 58, tryptophan 61, glutamate 101, phenylalanine 117, tyrosine 119, phenylalanine 127, aspartate 139, glutamate 154, and tryptophan 156. 2 cysteine pairs are disulfide-bonded: cysteine 67-cysteine 188 and cysteine 138-cysteine 167.

The protein belongs to the calycin superfamily. Histamine-binding salivary protein family. As to quaternary structure, monomer. Expressed in salivary glands.

It localises to the secreted. In terms of biological role, salivary tick protein that acts by scavenging histamine at the wound site, outcompeting histamine receptors for histamine, thereby overcoming host inflammatory responses. Binds histamine with a high-affinity (Kd=1.7 nM). Contains two binding histamine sites (H and L), that appear to bind histamine with differing affinities (high and low). This is Female-specific histamine-binding protein 2 from Rhipicephalus appendiculatus (Brown ear tick).